Here is a 508-residue protein sequence, read N- to C-terminus: Maturase K (508 aa).

Belongs to the intron maturase 2 family. MatK subfamily.

It is found in the plastid. The protein localises to the chloroplast. In terms of biological role, usually encoded in the trnK tRNA gene intron. Probably assists in splicing its own and other chloroplast group II introns. In Huidobria chilensis (Loasa chilensis), this protein is Maturase K.